The following is a 430-amino-acid chain: Serine--tRNA ligase (430 aa).

237–239 is a binding site for L-serine; sequence TAE. Residue 268–270 coordinates ATP; sequence RSE. Glu291 contributes to the L-serine binding site. 355–358 lines the ATP pocket; the sequence is EISS. Ser391 lines the L-serine pocket.

Belongs to the class-II aminoacyl-tRNA synthetase family. Type-1 seryl-tRNA synthetase subfamily. As to quaternary structure, homodimer. The tRNA molecule binds across the dimer.

Its subcellular location is the cytoplasm. It catalyses the reaction tRNA(Ser) + L-serine + ATP = L-seryl-tRNA(Ser) + AMP + diphosphate + H(+). The enzyme catalyses tRNA(Sec) + L-serine + ATP = L-seryl-tRNA(Sec) + AMP + diphosphate + H(+). The protein operates within aminoacyl-tRNA biosynthesis; selenocysteinyl-tRNA(Sec) biosynthesis; L-seryl-tRNA(Sec) from L-serine and tRNA(Sec): step 1/1. Its function is as follows. Catalyzes the attachment of serine to tRNA(Ser). Is also able to aminoacylate tRNA(Sec) with serine, to form the misacylated tRNA L-seryl-tRNA(Sec), which will be further converted into selenocysteinyl-tRNA(Sec). The polypeptide is Serine--tRNA ligase (Klebsiella pneumoniae (strain 342)).